The following is a 293-amino-acid chain: Cytidine deaminase (293 aa).

2 consecutive CMP/dCMP-type deaminase domains span residues 47 to 166 and 186 to 293; these read EDRA…FGPA and ESED…YQAV. Position 88-90 (88-90) interacts with substrate; that stretch reads NME. Residue H101 coordinates Zn(2+). Residue E103 is the Proton donor of the active site. Zn(2+) contacts are provided by C128 and C131.

The protein belongs to the cytidine and deoxycytidylate deaminase family. In terms of assembly, homodimer. Zn(2+) serves as cofactor.

It carries out the reaction cytidine + H2O + H(+) = uridine + NH4(+). It catalyses the reaction 2'-deoxycytidine + H2O + H(+) = 2'-deoxyuridine + NH4(+). In terms of biological role, this enzyme scavenges exogenous and endogenous cytidine and 2'-deoxycytidine for UMP synthesis. This is Cytidine deaminase from Aeromonas salmonicida (strain A449).